Consider the following 133-residue polypeptide: Basic leucine zipper transcriptional factor ATF-like 3 (133 aa).

A disordered region spans residues 1–68 (MSQGPPAGGV…EHESLEQENS (68 aa)). 2 positions are modified to phosphoserine: serine 2 and serine 24. Residues 11–24 (LQSSVAAPGNQPQS) are compositionally biased toward polar residues. The 64-residue stretch at 28-91 (DDRKVRRREK…RHLTEALKEH (64 aa)) folds into the bZIP domain. The basic motif stretch occupies residues 30 to 55 (RKVRRREKNRVAAQRSRKKQTQKSDK). Over residues 51–68 (QKSDKLHEEHESLEQENS) the composition is skewed to basic and acidic residues. A leucine-zipper region spans residues 56–84 (LHEEHESLEQENSVLRREIAKLKEELRHL).

The protein belongs to the bZIP family. As to quaternary structure, heterodimer; heterodimerizes with JUN family proteins. Interacts with JUN. In terms of tissue distribution, ubiquitously expressed.

It localises to the nucleus. Its function is as follows. AP-1 family transcription factor that controls the differentiation of CD8(+) thymic conventional dendritic cells in the immune system. Acts via the formation of a heterodimer with JUN family proteins that recognizes and binds DNA sequence 5'-TGA[CG]TCA-3' and regulates expression of target genes. Required for development of CD8-alpha(+) classical dendritic cells (cDCs) and related CD103(+) dendritic cells that cross-present antigens to CD8 T-cells and produce interleukin-12 (IL12) in response to pathogens. The chain is Basic leucine zipper transcriptional factor ATF-like 3 (Batf3) from Rattus norvegicus (Rat).